The chain runs to 322 residues: 4-diphosphocytidyl-2-C-methyl-D-erythritol kinase (322 aa).

The active site involves lysine 18. 130–140 (PMGAGLGGGSS) is an ATP binding site. Aspartate 172 is a catalytic residue.

It belongs to the GHMP kinase family. IspE subfamily.

The enzyme catalyses 4-CDP-2-C-methyl-D-erythritol + ATP = 4-CDP-2-C-methyl-D-erythritol 2-phosphate + ADP + H(+). The protein operates within isoprenoid biosynthesis; isopentenyl diphosphate biosynthesis via DXP pathway; isopentenyl diphosphate from 1-deoxy-D-xylulose 5-phosphate: step 3/6. In terms of biological role, catalyzes the phosphorylation of the position 2 hydroxy group of 4-diphosphocytidyl-2C-methyl-D-erythritol. This Psychrobacter arcticus (strain DSM 17307 / VKM B-2377 / 273-4) protein is 4-diphosphocytidyl-2-C-methyl-D-erythritol kinase.